Consider the following 156-residue polypeptide: Small ribosomal subunit protein uS7 (156 aa).

Belongs to the universal ribosomal protein uS7 family. Part of the 30S ribosomal subunit. Contacts proteins S9 and S11.

Its function is as follows. One of the primary rRNA binding proteins, it binds directly to 16S rRNA where it nucleates assembly of the head domain of the 30S subunit. Is located at the subunit interface close to the decoding center, probably blocks exit of the E-site tRNA. In Coprothermobacter proteolyticus (strain ATCC 35245 / DSM 5265 / OCM 4 / BT), this protein is Small ribosomal subunit protein uS7.